Reading from the N-terminus, the 127-residue chain is Small ribosomal subunit protein uS11 (127 aa).

This sequence belongs to the universal ribosomal protein uS11 family. As to quaternary structure, part of the 30S ribosomal subunit. Interacts with proteins S7 and S18. Binds to IF-3.

Functionally, located on the platform of the 30S subunit, it bridges several disparate RNA helices of the 16S rRNA. Forms part of the Shine-Dalgarno cleft in the 70S ribosome. This Rickettsia africae (strain ESF-5) protein is Small ribosomal subunit protein uS11.